We begin with the raw amino-acid sequence, 917 residues long: Alanine--tRNA ligase (917 aa).

Histidine 592, histidine 596, cysteine 694, and histidine 698 together coordinate Zn(2+).

The protein belongs to the class-II aminoacyl-tRNA synthetase family. It depends on Zn(2+) as a cofactor.

The protein resides in the cytoplasm. It carries out the reaction tRNA(Ala) + L-alanine + ATP = L-alanyl-tRNA(Ala) + AMP + diphosphate. Catalyzes the attachment of alanine to tRNA(Ala) in a two-step reaction: alanine is first activated by ATP to form Ala-AMP and then transferred to the acceptor end of tRNA(Ala). Also edits incorrectly charged Ser-tRNA(Ala) and Gly-tRNA(Ala) via its editing domain. This is Alanine--tRNA ligase from Sorangium cellulosum (strain So ce56) (Polyangium cellulosum (strain So ce56)).